Reading from the N-terminus, the 216-residue chain is Proenkephalin-A-B (216 aa).

5 consecutive propeptides follow at residues 64-85, 93-131, 144-155, 165-175, and 183-207; these read MDEL…LAKN, EYDS…GEMN, STDLEDETRGIQ, VGRPEWWQDYQ, and TRFT…PDME. Residues 114–133 are disordered; it reads PESAIYHDNNSETPGEMNKR.

It belongs to the opioid neuropeptide precursor family. The N-terminal domain contains 6 conserved cysteines thought to be involved in disulfide bonding and/or processing.

It localises to the secreted. In terms of biological role, enkephalin neuropeptides compete with and mimic the effects of opiate drugs. They play a role in a number of physiologic functions, including pain perception and responses to stress. The protein is Proenkephalin-A-B (penk-b) of Xenopus laevis (African clawed frog).